A 288-amino-acid polypeptide reads, in one-letter code: G1/S-specific cyclin-D2 (288 aa).

The 126-residue stretch at 26–151 (LQNLLTIEER…VLGKLKWNLA (126 aa)) folds into the Cyclin N-terminal domain. A disordered region spans residues 264 to 288 (QHNGSKSVEDPDQATTPTDVRDVDL). Residue S270 is modified to Phosphoserine. The residue at position 279 (T279) is a Phosphothreonine.

It belongs to the cyclin family. Cyclin D subfamily. As to quaternary structure, interacts with either CDK4 or CDK6 protein kinase to form a serine/threonine kinase holoenzyme complex. The cyclin subunit imparts substrate specificity to the complex. Phosphorylation at Thr-279 by MAP kinases is required for ubiquitination and degradation by the DCX(AMBRA1) complex. In terms of processing, ubiquitinated by the DCX(AMBRA1) complex during the transition from G1 to S cell phase, leading to its degradation: ubiquitination is dependent on Thr-279 phosphorylation. The DCX(AMBRA1) complex represents the major regulator of CCND2 stability during the G1/S transition. Polyubiquitinated by the SCF(FBXL2) complex, leading to proteasomal degradation.

It is found in the nucleus. The protein localises to the cytoplasm. The protein resides in the nucleus membrane. In terms of biological role, regulatory component of the cyclin D2-CDK4 (DC) complex that phosphorylates and inhibits members of the retinoblastoma (RB) protein family including RB1 and regulates the cell-cycle during G(1)/S transition. Phosphorylation of RB1 allows dissociation of the transcription factor E2F from the RB/E2F complex and the subsequent transcription of E2F target genes which are responsible for the progression through the G(1) phase. Hypophosphorylates RB1 in early G(1) phase. Cyclin D-CDK4 complexes are major integrators of various mitogenenic and antimitogenic signals. The protein is G1/S-specific cyclin-D2 (Ccnd2) of Rattus norvegicus (Rat).